A 296-amino-acid chain; its full sequence is uncharacterized protein (296 aa).

To Synechocystis PCC 6803 sll0787 and M.jannaschii MJ0640.

This is an uncharacterized protein from Methanocaldococcus jannaschii (strain ATCC 43067 / DSM 2661 / JAL-1 / JCM 10045 / NBRC 100440) (Methanococcus jannaschii).